Here is a 353-residue protein sequence, read N- to C-terminus: C-X-C chemokine receptor type 4 (353 aa).

Residues 1–22 (MEELHIYPSDNYTEEDLGSGDY) are important for chemokine binding and signaling. Topologically, residues 1-39 (MEELHIYPSDNYTEEDLGSGDYDSMKEPCFREENAHFNR) are extracellular. Tyrosine 7 bears the Sulfotyrosine mark. Asparagine 11 carries N-linked (GlcNAc...) asparagine glycosylation. The residue at position 12 (tyrosine 12) is a Sulfotyrosine. Serine 19 carries O-linked (Xyl...) (chondroitin sulfate) serine glycosylation. Tyrosine 22 bears the Sulfotyrosine mark. Intrachain disulfides connect cysteine 29–cysteine 275 and cysteine 110–cysteine 187. Residues 40-64 (IFLPTVYSIIFLTGIVGNGLVILVM) traverse the membrane as a helical segment. Residues 65–78 (GYQKKLRSMTDKYR) lie on the Cytoplasmic side of the membrane. The helical transmembrane segment at 79–100 (LHLSVADLLFVLTLPFWAVEAV) threads the bilayer. The tract at residues 95-98 (WAVE) is chemokine binding. Residues 101-111 (ANWYFGNFLCK) are Extracellular-facing. The chain crosses the membrane as a helical span at residues 112-131 (AVHVIYTVNLYSSVLILAFI). A chemokine binding region spans residues 114-118 (HVIYT). Over 132–155 (SLDRYLAIVHATNSQRPRKLLAEK) the chain is Cytoplasmic. The short motif at 134–136 (DRY) is the Important for signaling element. The interval 136–148 (YLAIVHATNSQRP) is involved in dimerization; when bound to chemokine. Residues 156 to 175 (VVYVGVWIPALLLTIPDFIF) form a helical membrane-spanning segment. Over 176-196 (ANVREADDRYICDRFYPNDSW) the chain is Extracellular. Residues 187-191 (CDRFY) form a chemokine binding, important for signaling region. The interval 192-211 (PNDSWLVVFQFQHIMVGLIL) is involved in dimerization. The chain crosses the membrane as a helical span at residues 197-217 (LVVFQFQHIMVGLILPGIVIL). Residues 218–242 (SCYCIIISKLSHSKGYQKRKALKTT) lie on the Cytoplasmic side of the membrane. The helical transmembrane segment at 243–262 (VILILAFFACWLPYYIGISI) threads the bilayer. At 263-283 (DSFILLEIIKQGCEFEKTVHK) the chain is on the extracellular side. Residues 267–269 (LLE) form an involved in dimerization region. The chain crosses the membrane as a helical span at residues 284–303 (WISITEALAFFHCCLNPILY). The Cytoplasmic portion of the chain corresponds to 304–353 (AFLGAKFKTSAQHALTSVSRGSSLKILSKGKRGGHSSVSTESESSSFHSS). Phosphoserine occurs at positions 320 and 322. A phosphoserine; by PKC and GRK6 mark is found at serine 325 and serine 326. The tract at residues 330–353 (LSKGKRGGHSSVSTESESSSFHSS) is disordered. Serine 331 is modified (phosphoserine; by GRK6). Residue lysine 332 forms a Glycyl lysine isopeptide (Lys-Gly) (interchain with G-Cter in ubiquitin) linkage. A compositionally biased stretch (low complexity) spans 338–353 (HSSVSTESESSSFHSS). Serine 340 is modified (phosphoserine; by GRK6). Residues serine 349 and serine 352 each carry the phosphoserine modification.

This sequence belongs to the G-protein coupled receptor 1 family. In terms of assembly, monomer. Can form homodimers. Interacts with CD164. Interacts with ARRB2; the interaction is dependent on the C-terminal phosphorylation of CXCR4 and allows activation of MAPK1 and MAPK3. Interacts with ARR3; the interaction is dependent on the C-terminal phosphorylation of CXCR4 and modulates calcium mobilization. Interacts with RNF113A; the interaction, enhanced by CXCL12, promotes CXCR4 ubiquitination and subsequent degradation. Interacts (via the cytoplasmic C-terminal) with ITCH (via the WW domains I and II); the interaction, enhanced by CXCL12, promotes CXCR4 ubiquitination and leads to its degradation. Interacts with extracellular ubiquitin. Interacts with DBN1; this interaction is enhanced by antigenic stimulation. Following LPS binding, may form a complex with GDF5, HSP90AA1 and HSPA8. Post-translationally, phosphorylated on agonist stimulation. Rapidly phosphorylated on serine and threonine residues in the C-terminal. Phosphorylation at Ser-325 and Ser-326 leads to recruitment of ITCH, ubiquitination and protein degradation. In terms of processing, ubiquitinated after ligand binding, leading to its degradation. Ubiquitinated by ITCH at the cell membrane on agonist stimulation. The ubiquitin-dependent mechanism, endosomal sorting complex required for transport (ESCRT), then targets CXCR4 for lysosomal degradation. This process is dependent also on prior Ser-/Thr-phosphorylation in the C-terminal of CXCR4. Also binding of ARRB1 to STAM negatively regulates CXCR4 sorting to lysosomes though modulating ubiquitination of SFR5S. Sulfation is required for efficient binding of CXCL12/SDF-1alpha and promotes its dimerization. Post-translationally, O- and N-glycosylated. N-glycosylation can mask coreceptor function. The O-glycosylation chondroitin sulfate attachment does not affect interaction with CXCL12/SDF-1alpha nor its coreceptor activity.

The protein localises to the cell membrane. The protein resides in the cell junction. It is found in the early endosome. It localises to the late endosome. Its subcellular location is the lysosome. In terms of biological role, receptor for the C-X-C chemokine CXCL12/SDF-1 that transduces a signal by increasing intracellular calcium ion levels and enhancing MAPK1/MAPK3 activation. Involved in the AKT signaling cascade. Plays a role in regulation of cell migration, e.g. during wound healing. Acts as a receptor for extracellular ubiquitin; leading to enhanced intracellular calcium ions and reduced cellular cAMP levels. Binds bacterial lipopolysaccharide (LPS) et mediates LPS-induced inflammatory response, including TNF secretion by monocytes. Involved in hematopoiesis and in cardiac ventricular septum formation. Also plays an essential role in vascularization of the gastrointestinal tract, probably by regulating vascular branching and/or remodeling processes in endothelial cells. Involved in cerebellar development. In the CNS, could mediate hippocampal-neuron survival. This chain is C-X-C chemokine receptor type 4 (CXCR4), found in Canis lupus familiaris (Dog).